A 360-amino-acid polypeptide reads, in one-letter code: Mitogen-activated protein kinase 14 (360 aa).

S2 is modified (N-acetylserine). S2 bears the Phosphoserine mark. Phosphothreonine is present on T16. The Protein kinase domain maps to 24–308 (YQNLSPVGSG…AAQALAHAYF (285 aa)). Residues 30–38 (VGSGAYGSV) and K53 each bind ATP. Residue K53 is modified to N6-acetyllysine. The active-site Proton acceptor is the D150. N6-acetyllysine is present on K152. T180 carries the phosphothreonine modification. Positions 180 to 182 (TGY) match the TXY motif. A Phosphotyrosine modification is found at Y182. Y323 carries the phosphotyrosine; by ZAP70 modification.

Belongs to the protein kinase superfamily. CMGC Ser/Thr protein kinase family. MAP kinase subfamily. Component of a signaling complex containing at least AKAP13, PKN1, MAPK14, ZAK and MAP2K3. Within this complex, AKAP13 interacts directly with PKN1, which in turn recruits MAPK14, MAP2K3 and ZAK. Binds to a kinase interaction motif within the protein tyrosine phosphatase, PTPRR. This interaction retains MAPK14 in the cytoplasm and prevents nuclear accumulation. Interacts with SPAG9 and GADD45A. Interacts with CDC25B, CDC25C, DUSP1, DUSP10, DUSP16, NP60, SUPT20H and TAB1. Interacts with casein kinase II subunits CSNK2A1 and CSNK2B. Interacts with PPM1D. Interacts with CDK5RAP3; recruits PPM1D to MAPK14 and may regulate its dephosphorylation. Interacts with DUSP2; this interaction does not lead to catalytic activation of DUSP2 and dephosphrylation of MAPK14. The cofactor is Mg(2+). In terms of processing, dually phosphorylated on Thr-180 and Tyr-182 by the MAP2Ks MAP2K3/MKK3, MAP2K4/MKK4 and MAP2K6/MKK6 in response to inflammatory cytokines, environmental stress or growth factors, which activates the enzyme. Dual phosphorylation can also be mediated by TAB1-mediated autophosphorylation. TCR engagement in T-cells also leads to Tyr-323 phosphorylation by ZAP70. Dephosphorylated and inactivated by DUPS1, DUSP10 and DUSP16. PPM1D also mediates dephosphorylation and inactivation of MAPK14. Acetylated at Lys-53 and Lys-152 by KAT2B and EP300. Acetylation at Lys-53 increases the affinity for ATP and enhances kinase activity. Lys-53 and Lys-152 are deacetylated by HDAC3. Post-translationally, ubiquitinated. Ubiquitination leads to degradation by the proteasome pathway.

It localises to the cytoplasm. Its subcellular location is the nucleus. The enzyme catalyses L-seryl-[protein] + ATP = O-phospho-L-seryl-[protein] + ADP + H(+). The catalysed reaction is L-threonyl-[protein] + ATP = O-phospho-L-threonyl-[protein] + ADP + H(+). Activated by cell stresses such as DNA damage, heat shock, osmotic shock, anisomycin and sodium arsenite, as well as pro-inflammatory stimuli such as bacterial lipopolysaccharide (LPS) and interleukin-1. Activation occurs through dual phosphorylation of Thr-180 and Tyr-182 by either of two dual specificity kinases, MAP2K3/MKK3 or MAP2K6/MKK6, and potentially also MAP2K4/MKK4, as well as by TAB1-mediated autophosphorylation. MAPK14 phosphorylated on both Thr-180 and Tyr-182 is 10-20-fold more active than MAPK14 phosphorylated only on Thr-180, whereas MAPK14 phosphorylated on Tyr-182 alone is inactive. whereas Thr-180 is necessary for catalysis, Tyr-182 may be required for auto-activation and substrate recognition. Phosphorylated at Tyr-323 by ZAP70 in an alternative activation pathway in response to TCR signaling in T-cells. This alternative pathway is inhibited by GADD45A. Inhibited by dual specificity phosphatases, such as DUSP1, DUSP10, and DUSP16. Specifically inhibited by the binding of pyridinyl-imidazole compounds, which are cytokine-suppressive anti-inflammatory drugs (CSAID). SB203580 is an inhibitor of MAPK14. Its function is as follows. Serine/threonine kinase which acts as an essential component of the MAP kinase signal transduction pathway. MAPK14 is one of the four p38 MAPKs which play an important role in the cascades of cellular responses evoked by extracellular stimuli such as pro-inflammatory cytokines or physical stress leading to direct activation of transcription factors. Accordingly, p38 MAPKs phosphorylate a broad range of proteins and it has been estimated that they may have approximately 200 to 300 substrates each. Some of the targets are downstream kinases which are activated through phosphorylation and further phosphorylate additional targets. RPS6KA5/MSK1 and RPS6KA4/MSK2 can directly phosphorylate and activate transcription factors such as CREB1, ATF1, the NF-kappa-B isoform RELA/NFKB3, STAT1 and STAT3, but can also phosphorylate histone H3 and the nucleosomal protein HMGN1. RPS6KA5/MSK1 and RPS6KA4/MSK2 play important roles in the rapid induction of immediate-early genes in response to stress or mitogenic stimuli, either by inducing chromatin remodeling or by recruiting the transcription machinery. On the other hand, two other kinase targets, MAPKAPK2/MK2 and MAPKAPK3/MK3, participate in the control of gene expression mostly at the post-transcriptional level, by phosphorylating ZFP36 (tristetraprolin) and ELAVL1, and by regulating EEF2K, which is important for the elongation of mRNA during translation. MKNK1/MNK1 and MKNK2/MNK2, two other kinases activated by p38 MAPKs, regulate protein synthesis by phosphorylating the initiation factor EIF4E2. MAPK14 also interacts with casein kinase II, leading to its activation through autophosphorylation and further phosphorylation of TP53/p53. In the cytoplasm, the p38 MAPK pathway is an important regulator of protein turnover. For example, CFLAR is an inhibitor of TNF-induced apoptosis whose proteasome-mediated degradation is regulated by p38 MAPK phosphorylation. In a similar way, MAPK14 phosphorylates the ubiquitin ligase SIAH2, regulating its activity towards EGLN3. MAPK14 may also inhibit the lysosomal degradation pathway of autophagy by interfering with the intracellular trafficking of the transmembrane protein ATG9. Another function of MAPK14 is to regulate the endocytosis of membrane receptors by different mechanisms that impinge on the small GTPase RAB5A. In addition, clathrin-mediated EGFR internalization induced by inflammatory cytokines and UV irradiation depends on MAPK14-mediated phosphorylation of EGFR itself as well as of RAB5A effectors. Ectodomain shedding of transmembrane proteins is regulated by p38 MAPKs as well. In response to inflammatory stimuli, p38 MAPKs phosphorylate the membrane-associated metalloprotease ADAM17. Such phosphorylation is required for ADAM17-mediated ectodomain shedding of TGF-alpha family ligands, which results in the activation of EGFR signaling and cell proliferation. Another p38 MAPK substrate is FGFR1. FGFR1 can be translocated from the extracellular space into the cytosol and nucleus of target cells, and regulates processes such as rRNA synthesis and cell growth. FGFR1 translocation requires p38 MAPK activation. In the nucleus, many transcription factors are phosphorylated and activated by p38 MAPKs in response to different stimuli. Classical examples include ATF1, ATF2, ATF6, ELK1, PTPRH, DDIT3, TP53/p53 and MEF2C and MEF2A. The p38 MAPKs are emerging as important modulators of gene expression by regulating chromatin modifiers and remodelers. The promoters of several genes involved in the inflammatory response, such as IL6, IL8 and IL12B, display a p38 MAPK-dependent enrichment of histone H3 phosphorylation on 'Ser-10' (H3S10ph) in LPS-stimulated myeloid cells. This phosphorylation enhances the accessibility of the cryptic NF-kappa-B-binding sites marking promoters for increased NF-kappa-B recruitment. Phosphorylates CDC25B and CDC25C which is required for binding to 14-3-3 proteins and leads to initiation of a G2 delay after ultraviolet radiation. Phosphorylates TIAR following DNA damage, releasing TIAR from GADD45A mRNA and preventing mRNA degradation. The p38 MAPKs may also have kinase-independent roles, which are thought to be due to the binding to targets in the absence of phosphorylation. Protein O-Glc-N-acylation catalyzed by the OGT is regulated by MAPK14, and, although OGT does not seem to be phosphorylated by MAPK14, their interaction increases upon MAPK14 activation induced by glucose deprivation. This interaction may regulate OGT activity by recruiting it to specific targets such as neurofilament H, stimulating its O-Glc-N-acylation. Required in mid-fetal development for the growth of embryo-derived blood vessels in the labyrinth layer of the placenta. Also plays an essential role in developmental and stress-induced erythropoiesis, through regulation of EPO gene expression. Phosphorylates S100A9 at 'Thr-113'. This is Mitogen-activated protein kinase 14 from Rattus norvegicus (Rat).